We begin with the raw amino-acid sequence, 201 residues long: Ubiquitin-conjugating enzyme E2 E2 (201 aa).

Residues 1 to 10 (MSTEAQRVDD) show a composition bias toward basic and acidic residues. The tract at residues 1–55 (MSTEAQRVDDSPSTSGGSSDGDQRESVQQEPDREQVQPKKKEGKISSKTAAKLST) is disordered. Position 2 is an N-acetylserine (serine 2). Serine 11, serine 15, serine 18, and serine 19 each carry phosphoserine. A compositionally biased stretch (basic and acidic residues) spans 21 to 45 (GDQRESVQQEPDREQVQPKKKEGKI). Residues 46–55 (SSKTAAKLST) are compositionally biased toward low complexity. The region spanning 55–201 (TSAKRIQKEL…ARQWTKRYAT (147 aa)) is the UBC core domain. Cysteine 139 (glycyl thioester intermediate) is an active-site residue.

It belongs to the ubiquitin-conjugating enzyme family. Autoubiquitinated.

It catalyses the reaction S-ubiquitinyl-[E1 ubiquitin-activating enzyme]-L-cysteine + [E2 ubiquitin-conjugating enzyme]-L-cysteine = [E1 ubiquitin-activating enzyme]-L-cysteine + S-ubiquitinyl-[E2 ubiquitin-conjugating enzyme]-L-cysteine.. Its pathway is protein modification; protein ubiquitination. In terms of biological role, accepts ubiquitin from the E1 complex and catalyzes its covalent attachment to other proteins. In vitro catalyzes 'Lys-11'- and 'Lys-48'-, as well as 'Lys-63'-linked polyubiquitination. Catalyzes the ISGylation of influenza A virus NS1 protein. This chain is Ubiquitin-conjugating enzyme E2 E2 (Ube2e2), found in Mus musculus (Mouse).